The chain runs to 183 residues: Dual-action ribosomal maturation protein DarP (183 aa).

Positions 1-27 are disordered; sequence MSSHSQEPVGEENFDDSEYDRPNKSQV. Acidic residues predominate over residues 9-18; that stretch reads VGEENFDDSE.

This sequence belongs to the DarP family.

The protein localises to the cytoplasm. Its function is as follows. Member of a network of 50S ribosomal subunit biogenesis factors which assembles along the 30S-50S interface, preventing incorrect 23S rRNA structures from forming. Promotes peptidyl transferase center (PTC) maturation. In Bordetella pertussis (strain Tohama I / ATCC BAA-589 / NCTC 13251), this protein is Dual-action ribosomal maturation protein DarP.